A 1485-amino-acid polypeptide reads, in one-letter code: Cystic fibrosis transmembrane conductance regulator (1485 aa).

Topologically, residues 1–78 (MQKTPLEKAS…KLINALKRCF (78 aa)) are cytoplasmic. A helical transmembrane segment spans residues 79–99 (FWKFLFYGILLYLGEVTKAVQ). One can recognise an ABC transmembrane type-1 1 domain in the interval 82–366 (FLFYGILLYL…WAVQTWYDSL (285 aa)). Topologically, residues 100 to 123 (PLLLGRIIASYDRDNEHERSIAYY) are extracellular. Residues 124-147 (LAIGLCLLFVVRMLLLHPAIFGLH) traverse the membrane as a helical segment. At 148-196 (HIGMQMRIAMFSLIYKKTLKLSSKVLDKISTGQLVSLLSNNLNKFDEGL) the chain is on the cytoplasmic side. The chain crosses the membrane as a helical span at residues 197-217 (ALAHFVWIAPLQVLLLMGLLW). Over 218-223 (DLLQAS) the chain is Extracellular. A helical transmembrane segment spans residues 224–244 (AFCGLGFLIILSLFQARLGRM). Residues 245–299 (MMKYKDKRAGKINERLVITSQIIENIQSVKAYCWENAMEKIIETIRETELKLTRK) are Cytoplasmic-facing. A helical transmembrane segment spans residues 300–320 (AAYVRYFNSSAFFFSGFFVVF). At 321 to 340 (LSIVPHLLLDGISLRKIFTT) the chain is on the extracellular side. A helical transmembrane segment spans residues 341–359 (ISFSIVLRMAVTRQFPWAV). Over 360–860 (QTWYDSLGVI…YLRFLTAHKN (501 aa)) the chain is Cytoplasmic. ATP contacts are provided by residues Trp402, Ser435, 459–466 (GSTGAGKT), and Gln494. One can recognise an ABC transporter 1 domain in the interval 422–647 (ISNEDPSAFF…RPEFSSHLIG (226 aa)). A disordered R region region spans residues 652 to 833 (NAERRNSIIT…EEINEEDLKE (182 aa)). Polar residues predominate over residues 750–760 (PRSNFLNTGPT). Residues 861 to 881 (FIFILVFCLVIFFVEVAASSA) traverse the membrane as a helical segment. The ABC transmembrane type-1 2 domain maps to 880–1163 (SAWLWIIKRN…ASIDVDSLMR (284 aa)). Residues 882–923 (WLWIIKRNAPAINMTSNENVSEVSDTLSVIVTHTSFYYVFYI) lie on the Extracellular side of the membrane. Asn894 and Asn900 each carry an N-linked (GlcNAc...) asparagine glycan. Residues 924-944 (YVGVADSLLALGIFRGLPLVH) form a discontinuously helical membrane-spanning segment. At 945-995 (SLISVSKVLHKKMLHAILHAPMSTFNTMRAGRILNRFSKDTAILDDILPLS) the chain is on the cytoplasmic side. Residues 996 to 1016 (IFDLTQLVLIVIGAITVVSLL) form a helical membrane-spanning segment. At 1017 to 1018 (EP) the chain is on the extracellular side. A helical transmembrane segment spans residues 1019 to 1039 (YIFLATVPVIVAFILLRSYFL). Residues 1040-1100 (HTSQQLKQLE…TANWFLYLST (61 aa)) lie on the Cytoplasmic side of the membrane. The helical transmembrane segment at 1101-1121 (LRWFQMTIEMIFVIFFIAVSF) threads the bilayer. At 1122-1135 (ISIATSGAGEEKVG) the chain is on the extracellular side. The chain crosses the membrane as a helical span at residues 1136 to 1156 (IVLTLAMNIMNTLQWAVNASI). The Cytoplasmic segment spans residues 1157 to 1485 (DVDSLMRSVS…TEEEVQDTRL (329 aa)). Positions 1213–1446 (MTVKNLSANY…KSFFKQAISH (234 aa)) constitute an ABC transporter 2 domain. ATP-binding positions include Tyr1222 and 1247 to 1254 (GRTGSGKS). The interval 1458-1485 (RNSSKRKSRPQISALQEETEEEVQDTRL) is disordered. A compositionally biased stretch (acidic residues) spans 1474-1485 (EETEEEVQDTRL). The short motif at 1483-1485 (TRL) is the PDZ-binding element.

Belongs to the ABC transporter superfamily. ABCC family. CFTR transporter (TC 3.A.1.202) subfamily. Monomer; does not require oligomerization for channel activity. May form oligomers in the membrane. Phosphorylated; cAMP treatment promotes phosphorylation and activates the channel. Dephosphorylation decreases the ATPase activity (in vitro). Phosphorylation at PKA sites activates the channel. Phosphorylation at PKC sites enhances the response to phosphorylation by PKA.

The protein resides in the apical cell membrane. The protein localises to the early endosome membrane. It localises to the cell membrane. Its subcellular location is the recycling endosome membrane. It is found in the endoplasmic reticulum membrane. The enzyme catalyses ATP + H2O + closed Cl(-) channel = ADP + phosphate + open Cl(-) channel.. The catalysed reaction is chloride(in) = chloride(out). It catalyses the reaction hydrogencarbonate(in) = hydrogencarbonate(out). It carries out the reaction ATP + H2O = ADP + phosphate + H(+). In terms of biological role, epithelial ion channel that plays an important role in the regulation of epithelial ion and water transport and fluid homeostasis. Mediates the transport of chloride ions across the cell membrane. Possesses an intrinsic ATPase activity and utilizes ATP to gate its channel; the passive flow of anions through the channel is gated by cycles of ATP binding and hydrolysis by the ATP-binding domains. The ion channel is also permeable to HCO(3)(-); selectivity depends on the extracellular chloride concentration. Exerts its function also by modulating the activity of other ion channels and transporters. Contributes to the regulation of the pH and the ion content of the epithelial fluid layer. This chain is Cystic fibrosis transmembrane conductance regulator, found in Xenopus laevis (African clawed frog).